The chain runs to 375 residues: Queuine tRNA-ribosyltransferase (375 aa).

Residue aspartate 89 is the Proton acceptor of the active site. Residues 89–93 (DSGGF), aspartate 143, glutamine 187, and glycine 214 each bind substrate. The segment at 245-251 (GVGKPED) is RNA binding. Residue aspartate 264 is the Nucleophile of the active site. Residues 269 to 273 (TRNAR) form an RNA binding; important for wobble base 34 recognition region. The Zn(2+) site is built by cysteine 302, cysteine 304, cysteine 307, and histidine 333.

This sequence belongs to the queuine tRNA-ribosyltransferase family. In terms of assembly, homodimer. Within each dimer, one monomer is responsible for RNA recognition and catalysis, while the other monomer binds to the replacement base PreQ1. Zn(2+) is required as a cofactor.

The catalysed reaction is 7-aminomethyl-7-carbaguanine + guanosine(34) in tRNA = 7-aminomethyl-7-carbaguanosine(34) in tRNA + guanine. Its pathway is tRNA modification; tRNA-queuosine biosynthesis. Catalyzes the base-exchange of a guanine (G) residue with the queuine precursor 7-aminomethyl-7-deazaguanine (PreQ1) at position 34 (anticodon wobble position) in tRNAs with GU(N) anticodons (tRNA-Asp, -Asn, -His and -Tyr). Catalysis occurs through a double-displacement mechanism. The nucleophile active site attacks the C1' of nucleotide 34 to detach the guanine base from the RNA, forming a covalent enzyme-RNA intermediate. The proton acceptor active site deprotonates the incoming PreQ1, allowing a nucleophilic attack on the C1' of the ribose to form the product. After dissociation, two additional enzymatic reactions on the tRNA convert PreQ1 to queuine (Q), resulting in the hypermodified nucleoside queuosine (7-(((4,5-cis-dihydroxy-2-cyclopenten-1-yl)amino)methyl)-7-deazaguanosine). This chain is Queuine tRNA-ribosyltransferase, found in Photobacterium profundum (strain SS9).